A 208-amino-acid polypeptide reads, in one-letter code: Putative archaetidylserine decarboxylase proenzyme (208 aa).

Ser172 functions as the Schiff-base intermediate with substrate; via pyruvic acid in the catalytic mechanism. A Pyruvic acid (Ser); by autocatalysis modification is found at Ser172.

Belongs to the phosphatidylserine decarboxylase family. PSD-A subfamily. In terms of assembly, heterodimer of a large membrane-associated beta subunit and a small pyruvoyl-containing alpha subunit. Pyruvate is required as a cofactor. Is synthesized initially as an inactive proenzyme. Formation of the active enzyme involves a self-maturation process in which the active site pyruvoyl group is generated from an internal serine residue via an autocatalytic post-translational modification. Two non-identical subunits are generated from the proenzyme in this reaction, and the pyruvate is formed at the N-terminus of the alpha chain, which is derived from the carboxyl end of the proenzyme. The post-translation cleavage follows an unusual pathway, termed non-hydrolytic serinolysis, in which the side chain hydroxyl group of the serine supplies its oxygen atom to form the C-terminus of the beta chain, while the remainder of the serine residue undergoes an oxidative deamination to produce ammonia and the pyruvoyl prosthetic group on the alpha chain.

The protein resides in the cell membrane. It carries out the reaction archaetidylserine + H(+) = archaetidylethanolamine + CO2. Functionally, catalyzes the formation of archaetidylethanolamine (PtdEtn) from archaetidylserine (PtdSer). This Methanosarcina acetivorans (strain ATCC 35395 / DSM 2834 / JCM 12185 / C2A) protein is Putative archaetidylserine decarboxylase proenzyme.